Here is a 336-residue protein sequence, read N- to C-terminus: Foldase protein PrsA (336 aa).

The first 22 residues, 1–22 (MKSAKKLLSVLCLGIFILTFTA), serve as a signal peptide directing secretion. Cys-23 carries N-palmitoyl cysteine lipidation. Cys-23 is lipidated: S-diacylglycerol cysteine. Positions 194 to 286 (PNTMNVSHIL…WGYHIIKVNS (93 aa)) constitute a PpiC domain.

It belongs to the PrsA family.

It is found in the cell membrane. It carries out the reaction [protein]-peptidylproline (omega=180) = [protein]-peptidylproline (omega=0). Functionally, plays a major role in protein secretion by helping the post-translocational extracellular folding of several secreted proteins. The sequence is that of Foldase protein PrsA from Clostridium botulinum (strain ATCC 19397 / Type A).